The sequence spans 311 residues: Pyrimidine-specific ribonucleoside hydrolase RihA (311 aa).

Histidine 240 is an active-site residue.

This sequence belongs to the IUNH family. RihA subfamily.

Hydrolyzes cytidine or uridine to ribose and cytosine or uracil, respectively. This is Pyrimidine-specific ribonucleoside hydrolase RihA from Klebsiella pneumoniae subsp. pneumoniae (strain ATCC 700721 / MGH 78578).